The primary structure comprises 154 residues: uncharacterized protein (154 aa).

The HotDog ACOT-type domain maps to 13–128 (SKGVLLLRTL…VFTFVAVDNN (116 aa)).

Belongs to the acyl coenzyme A hydrolase family.

This is an uncharacterized protein from Haemophilus influenzae (strain ATCC 51907 / DSM 11121 / KW20 / Rd).